Here is a 648-residue protein sequence, read N- to C-terminus: Mitochondrial Rho GTPase 3 (648 aa).

At 1–621 the chain is on the cytoplasmic side; the sequence is MWMGVGDSSG…KRSCKLNNRS (621 aa). A Phosphoserine modification is found at serine 11. The Miro 1 domain maps to 12 to 179; sequence PKPIRIVVVG…LYYAQKAVID (168 aa). EF-hand domains follow at residues 195 to 230 and 316 to 351; these read RCIA…CFDT and VAIE…APES. The Ca(2+) site is built by aspartate 208, asparagine 210, aspartate 212, glutamate 219, aspartate 329, asparagine 331, aspartate 333, asparagine 335, and glutamate 340. In terms of domain architecture, Miro 2 spans 425–599; the sequence is RKVVQCFVFG…FRKILTAAEN (175 aa). Residues 622–644 traverse the membrane as a helical segment; the sequence is LMAVSIGTAVLIAGLASFRLYTA. The Mitochondrial intermembrane segment spans residues 645-648; that stretch reads RKQS.

This sequence belongs to the mitochondrial Rho GTPase family. In terms of tissue distribution, expressed at very low levels in roots, leaves, stems, flowers and siliques.

It is found in the mitochondrion outer membrane. Functionally, mitochondrial GTPase that may be involved in mitochondrion development. This chain is Mitochondrial Rho GTPase 3, found in Arabidopsis thaliana (Mouse-ear cress).